An 875-amino-acid polypeptide reads, in one-letter code: MNNPLEAVTQAVNSLVTALKLPDESAKANEVLGEMSFPQFSRLLPYRDYNQESGLFMNDTTMGFMLEAIPINGANESIVEALDHMLRTKLPRGIPLCIHLMSSQLVGDRIEYGLREFSWSGEQAERFNAITRAYYMKAAATQFPLPEGMNLPLTLRHYRVFISYCSPSKKKSRADILEMENLVKIIRASLQGASITTQTVDAQAFIDIVGEMINHNPDSLYPKRRQLDPYSDLNYQCVEDSFDLKVRADYLTLGLRENGRNSTARILNFHLARNPEIAFLWNMADNYSNLLNPELSISCPFILTLTLVVEDQVKTHSEANLKYMDLEKKSKTSYAKWFPSVEKEAKEWGELRQRLGSGQSSVVSYFLNITAFCKDNNETALEVEQDILNSFRKNGFELISPRFNHMRNFLTCLPFMAGKGLFKQLKEAGVVQRAESFNVANLMPLVADNPLTPAGLLAPTYRNQLAFIDIFFRGMNNTNYNMAVCGTSGAGKTGLIQPLIRSVLDSGGFAVVFDMGDGYKSLCENMGGVYLDGETLRFNPFANITDIDQSAERVRDQLSVMASPNGNLDEVHEGLLLQAVRASWLAKENRARIDDVVDFLKNASDSEQYAESPTIRSRLDEMIVLLDQYTANGTYGQYFNSDEPSLRDDAKMVVLELGGLEDRPSLLVAVMFSLIIYIENRMYRTPRNLKKLNVIDEGWRLLDFKNHKVGEFIEKGYRTARRHTGAYITITQNIVDFDSDKASSAARAAWGNSSYKIILKQSAKEFAKYNQLYPDQFLPLQRDMIGKFGAAKDQWFSSFLLQVENHSSWHRLFVDPLSRAMYSSDGPDFEFVQQKRKEGLSIHEAVWQLAWKKSGPEMASLEAWLEEHEKYRSVA.

It is found in the cell inner membrane. In terms of biological role, required for the assembly of mature F-pilin subunits into extended F pili. In Escherichia coli (strain K12), this protein is Protein TraC (traC).